We begin with the raw amino-acid sequence, 292 residues long: Nucleotide-binding protein AZOSEA20610 (292 aa).

8-15 contacts ATP; it reads GLSGSGKS. 57–60 contributes to the GTP binding site; sequence DVRS.

Belongs to the RapZ-like family.

Its function is as follows. Displays ATPase and GTPase activities. The chain is Nucleotide-binding protein AZOSEA20610 from Aromatoleum aromaticum (strain DSM 19018 / LMG 30748 / EbN1) (Azoarcus sp. (strain EbN1)).